The primary structure comprises 296 residues: Glycine N-acyltransferase (296 aa).

The residue at position 16 (K16) is an N6-acetyllysine; alternate. K16 is subject to N6-succinyllysine; alternate. Residue K113 is modified to N6-acetyllysine. N6-acetyllysine; alternate occurs at positions 127, 141, and 142. K127, K141, and K142 each carry N6-succinyllysine; alternate. 2 positions are modified to N6-acetyllysine: K159 and K167. K169 carries the post-translational modification N6-succinyllysine. N6-acetyllysine; alternate is present on residues K183 and K256. Residues K183 and K256 each carry the N6-succinyllysine; alternate modification. N6-succinyllysine is present on K267.

This sequence belongs to the glycine N-acyltransferase family.

It localises to the mitochondrion. It catalyses the reaction an acyl-CoA + glycine = an N-acylglycine + CoA + H(+). The catalysed reaction is benzoyl-CoA + glycine = N-benzoylglycine + CoA + H(+). Mitochondrial acyltransferase which transfers an acyl group to the N-terminus of glycine and glutamine, although much less efficiently. Can conjugate a multitude of substrates to form a variety of N-acylglycines, thereby detoxify xenobiotics, such as benzoic acid or salicylic acid, and endogenous organic acids, such as isovaleric acid. This Mus musculus (Mouse) protein is Glycine N-acyltransferase (Glyat).